Consider the following 591-residue polypeptide: Aspartate--tRNA(Asp/Asn) ligase (591 aa).

Residue glutamate 176 participates in L-aspartate binding. Positions 200-203 (QLFK) are aspartate. Arginine 222 serves as a coordination point for L-aspartate. Residues 222-224 (RDE) and glutamine 231 contribute to the ATP site. Histidine 450 contacts L-aspartate. Glutamate 484 serves as a coordination point for ATP. Arginine 491 contributes to the L-aspartate binding site. ATP is bound at residue 536–539 (GLDR).

Belongs to the class-II aminoacyl-tRNA synthetase family. Type 1 subfamily. As to quaternary structure, homodimer.

It localises to the cytoplasm. The enzyme catalyses tRNA(Asx) + L-aspartate + ATP = L-aspartyl-tRNA(Asx) + AMP + diphosphate. Its function is as follows. Aspartyl-tRNA synthetase with relaxed tRNA specificity since it is able to aspartylate not only its cognate tRNA(Asp) but also tRNA(Asn). Reaction proceeds in two steps: L-aspartate is first activated by ATP to form Asp-AMP and then transferred to the acceptor end of tRNA(Asp/Asn). In Bacillus anthracis (strain CDC 684 / NRRL 3495), this protein is Aspartate--tRNA(Asp/Asn) ligase.